Reading from the N-terminus, the 437-residue chain is Tol-Pal system protein TolB (437 aa).

Positions methionine 1–alanine 30 are cleaved as a signal peptide. Positions serine 410–glycine 423 are enriched in polar residues. Residues serine 410–glutamine 437 are disordered.

This sequence belongs to the TolB family. The Tol-Pal system is composed of five core proteins: the inner membrane proteins TolA, TolQ and TolR, the periplasmic protein TolB and the outer membrane protein Pal. They form a network linking the inner and outer membranes and the peptidoglycan layer.

The protein resides in the periplasm. Part of the Tol-Pal system, which plays a role in outer membrane invagination during cell division and is important for maintaining outer membrane integrity. The protein is Tol-Pal system protein TolB of Nitrosospira multiformis (strain ATCC 25196 / NCIMB 11849 / C 71).